Reading from the N-terminus, the 296-residue chain is Homoserine kinase (296 aa).

ATP is bound at residue 92-102 (PQSRGLGSSAA).

It belongs to the GHMP kinase family. Homoserine kinase subfamily.

It localises to the cytoplasm. It catalyses the reaction L-homoserine + ATP = O-phospho-L-homoserine + ADP + H(+). Its pathway is amino-acid biosynthesis; L-threonine biosynthesis; L-threonine from L-aspartate: step 4/5. Functionally, catalyzes the ATP-dependent phosphorylation of L-homoserine to L-homoserine phosphate. In Cutibacterium acnes (strain DSM 16379 / KPA171202) (Propionibacterium acnes), this protein is Homoserine kinase.